We begin with the raw amino-acid sequence, 1201 residues long: DNA-directed RNA polymerase subunit beta' (1201 aa).

Zn(2+) contacts are provided by Cys60, Cys62, Cys75, and Cys78. The Mg(2+) site is built by Asp449, Asp451, and Asp453. Cys818, Cys892, Cys899, and Cys902 together coordinate Zn(2+).

Belongs to the RNA polymerase beta' chain family. The RNAP catalytic core consists of 2 alpha, 1 beta, 1 beta' and 1 omega subunit. When a sigma factor is associated with the core the holoenzyme is formed, which can initiate transcription. Requires Mg(2+) as cofactor. It depends on Zn(2+) as a cofactor.

The enzyme catalyses RNA(n) + a ribonucleoside 5'-triphosphate = RNA(n+1) + diphosphate. In terms of biological role, DNA-dependent RNA polymerase catalyzes the transcription of DNA into RNA using the four ribonucleoside triphosphates as substrates. This Listeria innocua serovar 6a (strain ATCC BAA-680 / CLIP 11262) protein is DNA-directed RNA polymerase subunit beta'.